We begin with the raw amino-acid sequence, 195 residues long: Myosin regulatory light chain, striated muscle, 25 kDa isoform (195 aa).

A compositionally biased stretch (basic and acidic residues) spans 1–17 (AKDKEKKEKKDKKKDDA). Positions 1–39 (AKDKEKKEKKDKKKDDAPAEEAPAAAAAPAEEAAPTPSA) are disordered. Positions 20–39 (EEAPAAAAAPAEEAAPTPSA) are enriched in low complexity. EF-hand domains lie at 55-90 (NQIQ…IGRE) and 124-159 (DTEG…VGDQ). Residues aspartate 68, aspartate 70, aspartate 72, and aspartate 79 each contribute to the Ca(2+) site.

Myosin is a hexamer of 2 heavy chains and 4 light chains.

In terms of biological role, plays an important role in regulation of muscle cell contractile activity. The polypeptide is Myosin regulatory light chain, striated muscle, 25 kDa isoform (Lumbricus terrestris (Common earthworm)).